Reading from the N-terminus, the 690-residue chain is Glycine--tRNA ligase beta subunit (690 aa).

The protein belongs to the class-II aminoacyl-tRNA synthetase family. In terms of assembly, tetramer of two alpha and two beta subunits.

Its subcellular location is the cytoplasm. The catalysed reaction is tRNA(Gly) + glycine + ATP = glycyl-tRNA(Gly) + AMP + diphosphate. The polypeptide is Glycine--tRNA ligase beta subunit (Lactobacillus gasseri (strain ATCC 33323 / DSM 20243 / BCRC 14619 / CIP 102991 / JCM 1131 / KCTC 3163 / NCIMB 11718 / NCTC 13722 / AM63)).